Here is a 76-residue protein sequence, read N- to C-terminus: Peptide ARACIN 1 (76 aa).

The N-terminal stretch at 1–22 (MAMKTSHVLLLCLMFVIGFVEA) is a signal peptide. The propeptide at 23–35 (RRSDTGPDISTPP) is removed in mature form. A SxS motif essential for MIK2 binding motif is present at residues 36-38 (SGS). The SCOOP motif signature appears at 36-49 (SGSCGASIAEFNSS). Residues 56–76 (APPCRRPRLQNSEDVTHTTLP) are disordered. The segment covering 64 to 76 (LQNSEDVTHTTLP) has biased composition (polar residues).

Belongs to the serine rich endogenous peptide (SCOOP) phytocytokine family. Interacts with MIK2 (via extracellular leucine-rich repeat domain); this interaction triggers the formation of complex between MIK2 and the BAK1/SERK3 and SERK4 coreceptors, and subsequent BAK1 activation by phosphorylation. In terms of tissue distribution, mainly expressed in young developing leaves, hydathodes, immature flowers and elongating pollen tubes.

The protein localises to the cell membrane. It localises to the secreted. It is found in the extracellular space. The protein resides in the apoplast. Its subcellular location is the endoplasmic reticulum. In terms of biological role, brassicaceae-specific phytocytokine (plant endogenous peptide released into the apoplast) perceived by MIK2 in a BAK1/SERK3 and SERK4 coreceptors-dependent manner, that modulates various physiological and antimicrobial processes including growth prevention and reactive oxygen species (ROS) response regulation. Inhibits the fungal growth of Alternaria brassicicola, Sclerotinia sclerotiorum, Fusarium graminearum, yeast (Saccharomyces) and Botrytis cinerea, thus being an antimicrobial peptide (AMP). Promotes resistance to A.brassicicola and B.cinerea. The protein is Peptide ARACIN 1 of Arabidopsis thaliana (Mouse-ear cress).